A 469-amino-acid chain; its full sequence is Dihydrolipoyl dehydrogenase (469 aa).

FAD is bound by residues 40-48, K57, and A120; that span reads EKAVLGGVC. A disulfide bond links C48 and C53. NAD(+) contacts are provided by residues 186–190, E209, and 275–278; these read GGGAI and AVGV. Residues D317 and A325 each coordinate FAD. The active-site Proton acceptor is the H450.

Belongs to the class-I pyridine nucleotide-disulfide oxidoreductase family. Homodimer. Requires FAD as cofactor.

Its subcellular location is the cytoplasm. It carries out the reaction N(6)-[(R)-dihydrolipoyl]-L-lysyl-[protein] + NAD(+) = N(6)-[(R)-lipoyl]-L-lysyl-[protein] + NADH + H(+). Lipoamide dehydrogenase is a component of the alpha-ketoacid dehydrogenase complexes. This chain is Dihydrolipoyl dehydrogenase (lpd), found in Chlorobaculum tepidum (strain ATCC 49652 / DSM 12025 / NBRC 103806 / TLS) (Chlorobium tepidum).